A 901-amino-acid chain; its full sequence is Inner capsid protein VP3 (901 aa).

The protein belongs to the turreted BTV-fold inner capsid family. As to quaternary structure, homodecamer; each decamer is made up of two conformers of VP2, called VP2A and VP2B. 12 homodecamers assemble to form an icosahedral capsid.

It localises to the virion. In terms of biological role, inner capsid protein that self-assembles to form an icosahedral capsid with a T=2 symmetry, which consists of 120 copies of VP2, with channels at each of its five-fold vertices. This capsid constitutes the innermost concentric layer of the viral mature particle. The sequence is that of Inner capsid protein VP3 (Segment-3) from Bluetongue virus 13 (isolate USA) (BTV 13).